The sequence spans 206 residues: Thymidylate kinase (206 aa).

10-17 (GIDGAGKS) is an ATP binding site.

It belongs to the thymidylate kinase family.

The enzyme catalyses dTMP + ATP = dTDP + ADP. Its function is as follows. Phosphorylation of dTMP to form dTDP in both de novo and salvage pathways of dTTP synthesis. This Neisseria meningitidis serogroup C / serotype 2a (strain ATCC 700532 / DSM 15464 / FAM18) protein is Thymidylate kinase.